Reading from the N-terminus, the 377-residue chain is Spore coat protein SA (377 aa).

It belongs to the glycosyltransferase group 1 family. Glycosyltransferase 4 subfamily.

The sequence is that of Spore coat protein SA (cotSA) from Bacillus subtilis (strain 168).